We begin with the raw amino-acid sequence, 628 residues long: Kinesin-like protein KIN-10B (628 aa).

Residues 20–340 (NVRVVLRVRP…VSLAARSRHI (321 aa)) enclose the Kinesin motor domain. Residue 114–121 (GATGSGKT) participates in ATP binding. The tract at residues 496–519 (SPIDSNAKPNSAHGSSPFLKPMTP) is disordered. Residues 498-509 (IDSNAKPNSAHG) are compositionally biased toward polar residues.

Belongs to the TRAFAC class myosin-kinesin ATPase superfamily. Kinesin family. KIN-10 subfamily.

The protein is Kinesin-like protein KIN-10B of Arabidopsis thaliana (Mouse-ear cress).